We begin with the raw amino-acid sequence, 336 residues long: Phosphate acyltransferase (336 aa).

Belongs to the PlsX family. As to quaternary structure, homodimer. Probably interacts with PlsY.

It localises to the cytoplasm. It catalyses the reaction a fatty acyl-[ACP] + phosphate = an acyl phosphate + holo-[ACP]. The protein operates within lipid metabolism; phospholipid metabolism. In terms of biological role, catalyzes the reversible formation of acyl-phosphate (acyl-PO(4)) from acyl-[acyl-carrier-protein] (acyl-ACP). This enzyme utilizes acyl-ACP as fatty acyl donor, but not acyl-CoA. This chain is Phosphate acyltransferase, found in Pseudomonas fluorescens (strain ATCC BAA-477 / NRRL B-23932 / Pf-5).